A 440-amino-acid polypeptide reads, in one-letter code: MRRRTSPRRTTTSKPQPIGPIQTFEVDGLTHEAKGVARLQGKVTFIEGALPGETVEAQVNKAGRRFDEAVLVNIIEPSVYRVEPSCQHFNLCGGCSFQHLANEQQLSAKADWLQGQLRNLITTQELETLSDTPTGYRRRARLAIDIKKGRMVLGFRGKASKEIISIDQCVVLTPNLQSTFLLLKLKLLENDLAGVLGHVELLEDTKGVSALFRLTSPISDELKNAWEDWAEKGRVALYWQAPKVGKAEVALEKMRYYDLGDLRLKYHPQDFIQVNAAMNQKMVVQAMDWLNPSKQDVILDLFCGVGNFSLPLAVHAQAVIGVEVQETMVEAARENARVNGFDNLSFVAADLTKPVNNELFKQTITKVLLDPPRAGAFEFLDSIIKIGPTQILYVSCNASTLARDAEYLVAKGYRVLRVSLMDMFPQTSHVETMMLLQKKK.

The segment at 1-21 (MRRRTSPRRTTTSKPQPIGPI) is disordered. The TRAM domain maps to 15-73 (PQPIGPIQTFEVDGLTHEAKGVARLQGKVTFIEGALPGETVEAQVNKAGRRFDEAVLVN). Positions 86, 92, 95, and 169 each coordinate [4Fe-4S] cluster. S-adenosyl-L-methionine-binding residues include Q273, F302, N307, E323, D350, and D370. Residue C396 is the Nucleophile of the active site.

This sequence belongs to the class I-like SAM-binding methyltransferase superfamily. RNA M5U methyltransferase family. RlmD subfamily.

It carries out the reaction uridine(1939) in 23S rRNA + S-adenosyl-L-methionine = 5-methyluridine(1939) in 23S rRNA + S-adenosyl-L-homocysteine + H(+). Catalyzes the formation of 5-methyl-uridine at position 1939 (m5U1939) in 23S rRNA. This chain is 23S rRNA (uracil(1939)-C(5))-methyltransferase RlmD, found in Marinomonas sp. (strain MWYL1).